Reading from the N-terminus, the 186-residue chain is Elongation factor P (186 aa).

The protein belongs to the elongation factor P family.

Its subcellular location is the cytoplasm. It participates in protein biosynthesis; polypeptide chain elongation. In terms of biological role, involved in peptide bond synthesis. Stimulates efficient translation and peptide-bond synthesis on native or reconstituted 70S ribosomes in vitro. Probably functions indirectly by altering the affinity of the ribosome for aminoacyl-tRNA, thus increasing their reactivity as acceptors for peptidyl transferase. The protein is Elongation factor P of Prochlorococcus marinus (strain MIT 9515).